The sequence spans 474 residues: 3-isopropylmalate dehydratase large subunit (474 aa).

[4Fe-4S] cluster is bound by residues Cys-353, Cys-414, and Cys-417.

It belongs to the aconitase/IPM isomerase family. LeuC type 1 subfamily. Heterodimer of LeuC and LeuD. It depends on [4Fe-4S] cluster as a cofactor.

The catalysed reaction is (2R,3S)-3-isopropylmalate = (2S)-2-isopropylmalate. It functions in the pathway amino-acid biosynthesis; L-leucine biosynthesis; L-leucine from 3-methyl-2-oxobutanoate: step 2/4. Functionally, catalyzes the isomerization between 2-isopropylmalate and 3-isopropylmalate, via the formation of 2-isopropylmaleate. In Pseudomonas aeruginosa (strain LESB58), this protein is 3-isopropylmalate dehydratase large subunit.